Reading from the N-terminus, the 30-residue chain is Kappa-sparatoxin-Hv1b (30 aa).

Intrachain disulfides connect Cys-3–Cys-17, Cys-10–Cys-22, and Cys-16–Cys-26. Residue Trp-30 is modified to Tryptophan amide.

The protein belongs to the neurotoxin 10 (Hwtx-1) family. 19 (HpTX2) subfamily. In terms of tissue distribution, expressed by the venom gland.

It is found in the secreted. Its function is as follows. Inhibitor of voltage-gated potassium channels of the Kv4/KCND family. Inhibition of Kv4.3/KCND3 and Kv4.2/KCND2 is strongly voltage-dependent, while inhibition of Kv4.1/KCND1 shows less voltage-dependence. Its binding site may be near the potassium channel voltage sensor. Also blocks calcium channels. This is Kappa-sparatoxin-Hv1b from Heteropoda venatoria (Brown huntsman spider).